The chain runs to 397 residues: MIVKPMVRNNICLNAHPQGCKKGVEDQIEYTKKRITAEVKAGAKAPKNVLVLGCSNGYGLASRITAAFGYGAATIGVSFEKAGSETKYGTPGWYNNLAFDEAAKREGLYSVTIDGDAFSDEIKAQVIEEAKKKGIKFDLIVYSLASPVRTDPDTGIMHKSVLKPFGKTFTGKTVDPFTGELKEISAEPANDEEAAATVKVMGGEDWERWIKQLSKEGLLEEGCITLAYSYIGPEATQALYRKGTIGKAKEHLEATAHRLNKENPSIRAFVSVNKGLVTRASAVIPVIPLYLASLFKVMKEKGNHEGCIEQITRLYAERLYRKDGTIPVDEENRIRIDDWELEEDVQKAVSALMEKVTGENAESLTDLAGYRHDFLASNGFDVEGINYEAEVERFDRI.

NAD(+)-binding positions include 53-58, 79-80, 116-117, and 144-145; these read GCSNGY, FE, DA, and LA. Tyrosine 230 serves as a coordination point for substrate. Tyrosine 240 functions as the Proton donor in the catalytic mechanism. NAD(+) is bound by residues lysine 249 and 276–278; that span reads LVT.

It belongs to the TER reductase family. As to quaternary structure, monomer.

It catalyses the reaction a 2,3-saturated acyl-CoA + NAD(+) = a (2E)-enoyl-CoA + NADH + H(+). Its pathway is lipid metabolism; fatty acid biosynthesis. Inhibited by lauroyl-CoA. Its function is as follows. Involved in the fatty acid synthesis (FAS II). Catalyzes the reduction of the carbon-carbon double bond of crotonyl-CoA to yield butyryl-CoA. In vitro it can also use hexenoyl-CoA and dodecenoyl-CoA as substrates. The sequence is that of Trans-2-enoyl-CoA reductase [NADH] from Treponema denticola (strain ATCC 35405 / DSM 14222 / CIP 103919 / JCM 8153 / KCTC 15104).